Consider the following 122-residue polypeptide: Large ribosomal subunit protein uL14 (122 aa).

The protein belongs to the universal ribosomal protein uL14 family. Part of the 50S ribosomal subunit. Forms a cluster with proteins L3 and L19. In the 70S ribosome, L14 and L19 interact and together make contacts with the 16S rRNA in bridges B5 and B8.

Its function is as follows. Binds to 23S rRNA. Forms part of two intersubunit bridges in the 70S ribosome. The sequence is that of Large ribosomal subunit protein uL14 from Acinetobacter baumannii (strain SDF).